A 1030-amino-acid polypeptide reads, in one-letter code: uncharacterized protein (1030 aa).

The SWIM-type zinc finger occupies 51 to 86 (IKVSFTAKDGELTCKCSCLANVDNCVHIVAVLLKYH). Residues 590-751 (RGLEENKFGG…WSCFDFVLPS (162 aa)) form the Helicase ATP-binding domain. Residue 603 to 610 (DEMGLGKT) participates in ATP binding. Positions 702-705 (DEAQ) match the DEAQ box motif. The 155-residue stretch at 867 to 1021 (ALEIIHEAIE…EDVNFFESLT (155 aa)) folds into the Helicase C-terminal domain.

It belongs to the SNF2/RAD54 helicase family.

This is an uncharacterized protein from Mycoplasma pneumoniae (strain ATCC 29342 / M129 / Subtype 1) (Mycoplasmoides pneumoniae).